The sequence spans 207 residues: Uracil phosphoribosyltransferase (207 aa).

Residues Arg-77, Arg-102, and 129–137 (DPMLATGGS) each bind 5-phospho-alpha-D-ribose 1-diphosphate. Uracil-binding positions include Ile-192 and 197–199 (GDA). Asp-198 contacts 5-phospho-alpha-D-ribose 1-diphosphate.

This sequence belongs to the UPRTase family. Mg(2+) is required as a cofactor.

It catalyses the reaction UMP + diphosphate = 5-phospho-alpha-D-ribose 1-diphosphate + uracil. It functions in the pathway pyrimidine metabolism; UMP biosynthesis via salvage pathway; UMP from uracil: step 1/1. Its activity is regulated as follows. Allosterically activated by GTP. Catalyzes the conversion of uracil and 5-phospho-alpha-D-ribose 1-diphosphate (PRPP) to UMP and diphosphate. This chain is Uracil phosphoribosyltransferase, found in Mycoplasma mobile (strain ATCC 43663 / 163K / NCTC 11711) (Mesomycoplasma mobile).